The following is a 722-amino-acid chain: Bifunctional UDP-N-acetylglucosamine 2-epimerase/N-acetylmannosamine kinase (722 aa).

Residues Arg-19, Ser-23, Arg-113, His-220, and Asn-253 each coordinate UDP. Positions 259, 271, 280, and 281 each coordinate CMP-N-acetyl-beta-neuraminate. 5 residues coordinate UDP: Val-282, Ser-301, Ser-302, Glu-307, and Arg-321. Positions 406–722 are N-acetylmannosamine kinase; that stretch reads TLSALAVDLG…VLDYTTRRIH (317 aa). Asp-413 is a Mg(2+) binding site. Gly-416 provides a ligand contact to an N-acyl-D-mannosamine 6-phosphate. Thr-417, Asn-418, and Arg-420 together coordinate ADP. 6 residues coordinate an N-acyl-D-mannosamine 6-phosphate: Gly-476, Arg-477, Thr-489, Asn-516, Asp-517, and Gly-545. An N-acyl-D-mannosamine is bound by residues Gly-476, Arg-477, Thr-489, Asn-516, and Asp-517. Asp-517 is an active-site residue. The an N-acyl-D-mannosamine site is built by Glu-566 and His-569. His-569 contacts an N-acyl-D-mannosamine 6-phosphate. His-569, Cys-579, Cys-581, and Cys-586 together coordinate Zn(2+). An an N-acyl-D-mannosamine 6-phosphate-binding site is contributed by Glu-588. Glu-588 contacts an N-acyl-D-mannosamine.

It in the N-terminal section; belongs to the UDP-N-acetylglucosamine 2-epimerase family. The protein in the C-terminal section; belongs to the ROK (NagC/XylR) family. Homodimer. Homotetramer. Homohexamer. The hexameric form exhibits both enzyme activities, whereas the dimeric form only catalyzes the phosphorylation of N-acyl-D-mannosamine. In terms of processing, phosphorylated. Phosphorylation by PKC activates the UDP-N-acetylglucosamine 2-epimerase activity. In terms of tissue distribution, widely expressed. Highest expression is observed in liver.

Its subcellular location is the cytoplasm. The protein resides in the cytosol. The catalysed reaction is UDP-N-acetyl-alpha-D-glucosamine + H2O = aldehydo-N-acetyl-D-mannosamine + UDP + H(+). It carries out the reaction an N-acyl-D-mannosamine + ATP = an N-acyl-D-mannosamine 6-phosphate + ADP + H(+). It participates in amino-sugar metabolism; N-acetylneuraminate biosynthesis. With respect to regulation, the UDP-N-acetylglucosamine 2-epimerase activity, in contrast to the N-acetylmannosamine kinase activity, exhibits allosteric regulation by cytidine monophosphate-N-acetylneuraminic acid (CMP-Neu5Ac), the end product of neuraminic acid biosynthesis. Moreover, the activity is contingent upon the oligomeric state of the enzyme. The monomeric form is inactive, while the dimeric form selectively catalyzes the phosphorylation of N-acetylmannosamine. The hexameric form, on the other hand, demonstrates full proficiency in both enzyme activities. Furthermore, the UDP-N-acetylglucosamine 2-epimerase activity is increased by PKC-mediated phosphorylation. In terms of biological role, bifunctional enzyme that possesses both UDP-N-acetylglucosamine 2-epimerase and N-acetylmannosamine kinase activities, and serves as the initiator of the biosynthetic pathway leading to the production of N-acetylneuraminic acid (NeuAc), a critical precursor in the synthesis of sialic acids. By catalyzing this pivotal and rate-limiting step in sialic acid biosynthesis, this enzyme assumes a pivotal role in governing the regulation of cell surface sialylation. Sialic acids represent a category of negatively charged sugars that reside on the surface of cells as terminal components of glycoconjugates and mediate important functions in various cellular processes, including cell adhesion, signal transduction, and cellular recognition. The chain is Bifunctional UDP-N-acetylglucosamine 2-epimerase/N-acetylmannosamine kinase from Rattus norvegicus (Rat).